Consider the following 139-residue polypeptide: MKKTALLNAQLSHCIATLGHTESLTICDAGLPIPLSVERIDLALTAGVPSFLQTLNVVTNEMYVERVVIAEEIKEKNPEILTALLTQLQQLESHQGNQIQVEFESHETFKKFTLESKAIVRTGECSPYANVILYSGVPF.

Histidine 20 serves as the catalytic Proton donor. Substrate-binding positions include aspartate 28, histidine 106, and 128 to 130; that span reads YAN.

It belongs to the RbsD / FucU family. RbsD subfamily. Homodecamer.

The protein resides in the cytoplasm. It catalyses the reaction beta-D-ribopyranose = beta-D-ribofuranose. Its pathway is carbohydrate metabolism; D-ribose degradation; D-ribose 5-phosphate from beta-D-ribopyranose: step 1/2. Catalyzes the interconversion of beta-pyran and beta-furan forms of D-ribose. The sequence is that of D-ribose pyranase from Haemophilus influenzae (strain PittGG).